The following is a 358-amino-acid chain: Trans-enoyl reductase milB (358 aa).

NADP(+)-binding positions include 48-51 (VDTK), 170-173 (ATAT), 193-196 (SAKH), Tyr211, 258-259 (LD), and 349-350 (VR).

This sequence belongs to the zinc-containing alcohol dehydrogenase family. As to quaternary structure, monomer.

The catalysed reaction is 10 malonyl-CoA + acetyl-CoA + 3 AH2 + 8 NADPH + 18 H(+) = cordypyrone A + 3 A + 10 CO2 + 8 NADP(+) + 11 CoA + 8 H2O. It functions in the pathway secondary metabolite biosynthesis. Trans-enoyl reductase; part of the gene cluster that mediates the biosynthesis of cordypyrones A and B, 2 pyrones that show modest activities against pathogenic bacteria including methicillin-resistant Staphylococcus aureus (MRSA), Mycobacterium tuberculosis and Bacillus cereus. The HR-PKS milA catalyzes the formation of cordypyrones A via condensation of one acetate with 10 malonate units. Since milA lacks an enoyl reductase domain, the 2 beta-keto processing domains DH and KR of milA collaborate with the trans-enoyl reductase milB to catalyze the different levels of reduction. The cytochrome P450 monooxygenase milC then hydroxylates the C-22 of cordypyrones A to yield cordypyrones B. In Cordyceps militaris (strain CM01) (Caterpillar fungus), this protein is Trans-enoyl reductase milB.